Reading from the N-terminus, the 89-residue chain is Small ribosomal subunit protein bS16 (89 aa).

This sequence belongs to the bacterial ribosomal protein bS16 family.

In Anaplasma marginale (strain Florida), this protein is Small ribosomal subunit protein bS16.